The following is a 327-amino-acid chain: Transaldolase (327 aa).

The active-site Schiff-base intermediate with substrate is K132.

The protein belongs to the transaldolase family. Type 1 subfamily.

Its subcellular location is the cytoplasm. The catalysed reaction is D-sedoheptulose 7-phosphate + D-glyceraldehyde 3-phosphate = D-erythrose 4-phosphate + beta-D-fructose 6-phosphate. It functions in the pathway carbohydrate degradation; pentose phosphate pathway; D-glyceraldehyde 3-phosphate and beta-D-fructose 6-phosphate from D-ribose 5-phosphate and D-xylulose 5-phosphate (non-oxidative stage): step 2/3. In terms of biological role, transaldolase is important for the balance of metabolites in the pentose-phosphate pathway. The sequence is that of Transaldolase from Chlamydia muridarum (strain MoPn / Nigg).